We begin with the raw amino-acid sequence, 181 residues long: GTP cyclohydrolase 1 2 (181 aa).

The protein belongs to the GTP cyclohydrolase I family. In terms of assembly, homomer.

It catalyses the reaction GTP + H2O = 7,8-dihydroneopterin 3'-triphosphate + formate + H(+). Its pathway is cofactor biosynthesis; 7,8-dihydroneopterin triphosphate biosynthesis; 7,8-dihydroneopterin triphosphate from GTP: step 1/1. This is GTP cyclohydrolase 1 2 (folE2) from Pseudomonas aeruginosa (strain ATCC 15692 / DSM 22644 / CIP 104116 / JCM 14847 / LMG 12228 / 1C / PRS 101 / PAO1).